Here is a 415-residue protein sequence, read N- to C-terminus: Coiled-coil domain-containing glutamate-rich protein 1 (415 aa).

Residues 1 to 11 are compositionally biased toward basic and acidic residues; it reads MTQTLDTKEDP. Disordered regions lie at residues 1–20, 29–64, 133–162, 202–241, and 255–372; these read MTQT…GWAS, FGPR…QQYG, RPPG…SPPV, QEKL…GQED, and PSLV…PLEM. Basic residues-rich tracts occupy residues 31 to 46 and 135 to 156; these read PRRR…RPRY and PGRK…RRSA. Coiled-coil stretches lie at residues 197–224 and 264–366; these read EDMR…STAS and DEEK…EEEN. The segment covering 211-220 has biased composition (low complexity); that stretch reads ALRAQQAQAA. Residues 275 to 363 show a composition bias toward acidic residues; that stretch reads VEEEEEGERE…EGLAEDEQTE (89 aa).

The protein resides in the nucleus. Its function is as follows. Regulator of histone epigenetic modifications and chromatin compaction into the sperm head, required for histone-to-protamine (HTP) transition. HTP is a key event in which somatic histones are first replaced by testis-specific histone variants, then transition proteins (TNPs) are incorporated into the spermatid nucleus, and finally protamines (PRMs) replace the TNPs to promote chromatin condensation. The polypeptide is Coiled-coil domain-containing glutamate-rich protein 1 (CCER1) (Bos taurus (Bovine)).